The chain runs to 105 residues: Pyrimidine/purine nucleoside phosphorylase (105 aa).

Belongs to the nucleoside phosphorylase PpnP family.

The enzyme catalyses a purine D-ribonucleoside + phosphate = a purine nucleobase + alpha-D-ribose 1-phosphate. The catalysed reaction is adenosine + phosphate = alpha-D-ribose 1-phosphate + adenine. It carries out the reaction cytidine + phosphate = cytosine + alpha-D-ribose 1-phosphate. It catalyses the reaction guanosine + phosphate = alpha-D-ribose 1-phosphate + guanine. The enzyme catalyses inosine + phosphate = alpha-D-ribose 1-phosphate + hypoxanthine. The catalysed reaction is thymidine + phosphate = 2-deoxy-alpha-D-ribose 1-phosphate + thymine. It carries out the reaction uridine + phosphate = alpha-D-ribose 1-phosphate + uracil. It catalyses the reaction xanthosine + phosphate = alpha-D-ribose 1-phosphate + xanthine. In terms of biological role, catalyzes the phosphorolysis of diverse nucleosides, yielding D-ribose 1-phosphate and the respective free bases. Can use uridine, adenosine, guanosine, cytidine, thymidine, inosine and xanthosine as substrates. Also catalyzes the reverse reactions. The polypeptide is Pyrimidine/purine nucleoside phosphorylase (Cupriavidus taiwanensis (strain DSM 17343 / BCRC 17206 / CCUG 44338 / CIP 107171 / LMG 19424 / R1) (Ralstonia taiwanensis (strain LMG 19424))).